Here is a 246-residue protein sequence, read N- to C-terminus: MGKRILVQRRGRGGSQFRSPSWKRDGPVRYPPLGVISGKGYVVDILHEPGLNAPVAKIVTENGVEFFNYAAEGLYVGQVVEIGKGASPKTGNIMILGEIPEGTMIFNVEKRAGDGGKFARAGGTYAVVIGQKPEENKTIIRLPSGRTVEVDSRGRATVGIVAGGGRIEKPFLKAGKKYHRARAKAWKYPTVRGKAMSPYAHPHGGGSHQKGGTPVPKTAPPGQKVGFIGSRCTGRGCVRARAQQKQ.

The disordered stretch occupies residues 197–227 (SPYAHPHGGGSHQKGGTPVPKTAPPGQKVGF).

Belongs to the universal ribosomal protein uL2 family. In terms of assembly, part of the 50S ribosomal subunit. Forms a bridge to the 30S subunit in the 70S ribosome.

One of the primary rRNA binding proteins. Required for association of the 30S and 50S subunits to form the 70S ribosome, for tRNA binding and peptide bond formation. It has been suggested to have peptidyltransferase activity; this is somewhat controversial. Makes several contacts with the 16S rRNA in the 70S ribosome. This Pyrobaculum aerophilum (strain ATCC 51768 / DSM 7523 / JCM 9630 / CIP 104966 / NBRC 100827 / IM2) protein is Large ribosomal subunit protein uL2.